A 351-amino-acid chain; its full sequence is Molybdenum import ATP-binding protein ModC (351 aa).

The region spanning 1–229 is the ABC transporter domain; sequence MLQINVKKQL…PIFAPWKGES (229 aa). 31–38 lines the ATP pocket; sequence GLSGSGKT. In terms of domain architecture, Mop spans 289–351; that stretch reads QTSIRNILRG…YVQIKAVSVM (63 aa).

This sequence belongs to the ABC transporter superfamily. Molybdate importer (TC 3.A.1.8) family. The complex is composed of two ATP-binding proteins (ModC), two transmembrane proteins (ModB) and a solute-binding protein (ModA).

It is found in the cell inner membrane. It carries out the reaction molybdate(out) + ATP + H2O = molybdate(in) + ADP + phosphate + H(+). Part of the ABC transporter complex ModABC involved in molybdenum import. Responsible for energy coupling to the transport system. The polypeptide is Molybdenum import ATP-binding protein ModC (Haemophilus influenzae (strain ATCC 51907 / DSM 11121 / KW20 / Rd)).